The sequence spans 47 residues: Bacteriocin curvaticin DN317 (47 aa).

Belongs to the bacteriocin class IIA/YGNGV family.

It is found in the secreted. Functionally, has bactericidal activity against various Gram-negative Campylobacter, and the Gram-positive L.monocytogenes and B.subtilis. In vitro, inhibits C.jejuni strain ATCC 33560 (MIC=27.3 ug/ml). The polypeptide is Bacteriocin curvaticin DN317 (Latilactobacillus curvatus (Lactobacillus curvatus)).